We begin with the raw amino-acid sequence, 57 residues long: UPF0391 membrane protein BRADO5617 (57 aa).

The next 2 helical transmembrane spans lie at Met-1–Gly-21 and Ile-30–Leu-50.

This sequence belongs to the UPF0391 family.

The protein resides in the cell membrane. The chain is UPF0391 membrane protein BRADO5617 from Bradyrhizobium sp. (strain ORS 278).